Here is a 146-residue protein sequence, read N- to C-terminus: Small ribosomal subunit protein uS5 (146 aa).

Residues 8 to 71 (FSEVVVNIGR…DDAFKNIIKV (64 aa)) form the S5 DRBM domain.

This sequence belongs to the universal ribosomal protein uS5 family. Part of the 30S ribosomal subunit. Contacts proteins S4 and S8.

In terms of biological role, with S4 and S12 plays an important role in translational accuracy. Functionally, located at the back of the 30S subunit body where it stabilizes the conformation of the head with respect to the body. The polypeptide is Small ribosomal subunit protein uS5 (Helicobacter hepaticus (strain ATCC 51449 / 3B1)).